The primary structure comprises 222 residues: MAARPKLHYPNGRGRMESVRWVLAAAGVEFDEEFLETKEQLYKLQDGNHLLFQQVPMVEIDGMKLVQTRSILHYIADKHNLFGKNLKERTLIDMYVEGTLDLLELLIMHPFLKPDDQQKEVVNMAQKAIIRYFPVFEKILRGHGQSFLVGNQLSLADVILLQTILALEEKIPNILSAFPFLQEYTVKLSNIPTIKRFLEPGSKKKPPPDEIYVRTVYNIFRP.

N-acetylmethionine is present on Met1. The 81-residue stretch at 3–83 (ARPKLHYPNG…YIADKHNLFG (81 aa)) folds into the GST N-terminal domain. Glutathione-binding positions include Tyr9, 54-55 (QV), and 67-68 (QT). In terms of domain architecture, GST C-terminal spans 85 to 208 (NLKERTLIDM…EPGSKKKPPP (124 aa)). Position 212 (Tyr212) interacts with substrate.

Belongs to the GST superfamily. Alpha family. In terms of assembly, homodimer. Expressed at a high level in brain, placenta, and skeletal muscle and much lower in lung and liver.

The protein resides in the cytoplasm. The catalysed reaction is RX + glutathione = an S-substituted glutathione + a halide anion + H(+). Its function is as follows. Conjugation of reduced glutathione to a wide number of exogenous and endogenous hydrophobic electrophiles. This isozyme has a high catalytic efficiency with 4-hydroxyalkenals such as 4-hydroxynonenal (4-HNE). This Homo sapiens (Human) protein is Glutathione S-transferase A4 (GSTA4).